A 193-amino-acid polypeptide reads, in one-letter code: dTTP/UTP pyrophosphatase (193 aa).

Residue aspartate 71 is the Proton acceptor of the active site.

It belongs to the Maf family. YhdE subfamily. A divalent metal cation serves as cofactor.

It localises to the cytoplasm. The catalysed reaction is dTTP + H2O = dTMP + diphosphate + H(+). It carries out the reaction UTP + H2O = UMP + diphosphate + H(+). Functionally, nucleoside triphosphate pyrophosphatase that hydrolyzes dTTP and UTP. May have a dual role in cell division arrest and in preventing the incorporation of modified nucleotides into cellular nucleic acids. In Dictyoglomus thermophilum (strain ATCC 35947 / DSM 3960 / H-6-12), this protein is dTTP/UTP pyrophosphatase.